We begin with the raw amino-acid sequence, 93 residues long: CRISPR-associated endoribonuclease Cas2 (93 aa).

Mg(2+) is bound at residue Asp13.

Belongs to the CRISPR-associated endoribonuclease Cas2 protein family. As to quaternary structure, homodimer, forms a heterotetramer with a Cas1 homodimer. Mg(2+) serves as cofactor.

CRISPR (clustered regularly interspaced short palindromic repeat), is an adaptive immune system that provides protection against mobile genetic elements (viruses, transposable elements and conjugative plasmids). CRISPR clusters contain sequences complementary to antecedent mobile elements and target invading nucleic acids. CRISPR clusters are transcribed and processed into CRISPR RNA (crRNA). Functions as a ssRNA-specific endoribonuclease. Involved in the integration of spacer DNA into the CRISPR cassette. The chain is CRISPR-associated endoribonuclease Cas2 from Korarchaeum cryptofilum (strain OPF8).